Reading from the N-terminus, the 225-residue chain is Ribose-5-phosphate isomerase A (225 aa).

Substrate is bound by residues Thr26–Thr29, Asp82–Asp85, and Lys95–Gly98. Glu104 functions as the Proton acceptor in the catalytic mechanism. Lys122 provides a ligand contact to substrate.

This sequence belongs to the ribose 5-phosphate isomerase family. Homodimer.

The enzyme catalyses aldehydo-D-ribose 5-phosphate = D-ribulose 5-phosphate. It participates in carbohydrate degradation; pentose phosphate pathway; D-ribose 5-phosphate from D-ribulose 5-phosphate (non-oxidative stage): step 1/1. Catalyzes the reversible conversion of ribose-5-phosphate to ribulose 5-phosphate. The chain is Ribose-5-phosphate isomerase A from Streptococcus mutans serotype c (strain ATCC 700610 / UA159).